The primary structure comprises 314 residues: Thymidylate synthase (314 aa).

DUMP contacts are provided by residues R21 and 176–177 (RR). C196 acts as the Nucleophile in catalysis. Residues 216 to 219 (RSAD), N227, and 257 to 259 (HLY) contribute to the dUMP site. A (6R)-5,10-methylene-5,6,7,8-tetrahydrofolate-binding site is contributed by D219. S313 provides a ligand contact to (6R)-5,10-methylene-5,6,7,8-tetrahydrofolate.

Belongs to the thymidylate synthase family. Bacterial-type ThyA subfamily. Homodimer.

It is found in the cytoplasm. The enzyme catalyses dUMP + (6R)-5,10-methylene-5,6,7,8-tetrahydrofolate = 7,8-dihydrofolate + dTMP. The protein operates within pyrimidine metabolism; dTTP biosynthesis. Functionally, catalyzes the reductive methylation of 2'-deoxyuridine-5'-monophosphate (dUMP) to 2'-deoxythymidine-5'-monophosphate (dTMP) while utilizing 5,10-methylenetetrahydrofolate (mTHF) as the methyl donor and reductant in the reaction, yielding dihydrofolate (DHF) as a by-product. This enzymatic reaction provides an intracellular de novo source of dTMP, an essential precursor for DNA biosynthesis. The polypeptide is Thymidylate synthase (Listeria innocua serovar 6a (strain ATCC BAA-680 / CLIP 11262)).